Here is a 120-residue protein sequence, read N- to C-terminus: Ribosome-binding factor A (120 aa).

The protein belongs to the RbfA family. In terms of assembly, monomer. Binds 30S ribosomal subunits, but not 50S ribosomal subunits or 70S ribosomes.

Its subcellular location is the cytoplasm. Its function is as follows. One of several proteins that assist in the late maturation steps of the functional core of the 30S ribosomal subunit. Associates with free 30S ribosomal subunits (but not with 30S subunits that are part of 70S ribosomes or polysomes). Required for efficient processing of 16S rRNA. May interact with the 5'-terminal helix region of 16S rRNA. The sequence is that of Ribosome-binding factor A from Rickettsia conorii (strain ATCC VR-613 / Malish 7).